Here is a 504-residue protein sequence, read N- to C-terminus: Cytochrome P450 71B4 (504 aa).

A helical membrane pass occupies residues 1–21 (MVSLLSFFLLLLVPIFFLLIF). C446 lines the heme pocket.

It belongs to the cytochrome P450 family. Requires heme as cofactor.

It localises to the membrane. This is Cytochrome P450 71B4 (CYP71B4) from Arabidopsis thaliana (Mouse-ear cress).